Consider the following 310-residue polypeptide: tRNA uridine(34) hydroxylase (310 aa).

One can recognise a Rhodanese domain in the interval 124–218 (SDPEVLLIDT…YFEEVAQEES (95 aa)). The active-site Cysteine persulfide intermediate is cysteine 178.

It belongs to the TrhO family.

It carries out the reaction uridine(34) in tRNA + AH2 + O2 = 5-hydroxyuridine(34) in tRNA + A + H2O. Catalyzes oxygen-dependent 5-hydroxyuridine (ho5U) modification at position 34 in tRNAs. In Pseudomonas entomophila (strain L48), this protein is tRNA uridine(34) hydroxylase.